We begin with the raw amino-acid sequence, 447 residues long: Trichothecene C-3 esterase (447 aa).

The first 22 residues, 1 to 22 (MALNRLVFSLSLWLGFIGAAQA), serve as a signal peptide directing secretion. 4 N-linked (GlcNAc...) asparagine glycosylation sites follow: asparagine 59, asparagine 66, asparagine 136, and asparagine 189. The Charge relay system role is filled by serine 202. Asparagine 238, asparagine 284, and asparagine 314 each carry an N-linked (GlcNAc...) asparagine glycan. Catalysis depends on charge relay system residues aspartate 352 and histidine 384. Asparagine 389 and asparagine 423 each carry an N-linked (GlcNAc...) asparagine glycan.

Belongs to the AB hydrolase superfamily. Lipase family.

Its pathway is sesquiterpene biosynthesis; trichothecene biosynthesis. Functionally, trichothecene C-3 esterase; part of the core gene cluster that mediates the biosynthesis of trichothecenes, a very large family of chemically related bicyclic sesquiterpene compounds acting as mycotoxins, including T2-toxin. The biosynthesis of trichothecenes begins with the cyclization of farnesyl diphosphate to trichodiene and is catalyzed by the trichodiene synthase TRI5. Trichodiene undergoes a series of oxygenations catalyzed by the cytochrome P450 monooxygenase TRI4. TRI4 controls the addition of four oxygens at C-2, C-3, C-11, and the C-12, C-13-epoxide to form the intermediate isotrichotriol. Isotrichotriol then undergoes a non-enzymatic isomerization and cyclization to form isotrichodermol. During this process, the oxygen at the C-2 position becomes the pyran ring oxygen and the hydroxyl group at C-11 is lost. More complex type A trichothecenes are built by modifying isotrichodermol through a series of paired hydroxylation and acetylation or acylation steps. Isotrichodermol is converted to isotrichodermin by the acetyltransferase TRI101. TRI101 encodes a C-3 transacetylase that acts as a self-protection or resistance factor during biosynthesis and that the presence of a free C-3 hydroxyl group is a key component of Fusarium trichothecene phytotoxicity. A second hydroxyl group is added to C-15 by the trichothecene C-15 hydroxylase TRI11, producing 15-decalonectrin, which is then acetylated by TRI3, producing calonectrin. A third hydroxyl group is added at C-4 by the cytochrome P450 monooxygenase TRI13, converting calonectrin to 3,15-diacetoxyspirpenol, which is subsequently acetylated by the acetyltransferase TRI7. A fourth hydroxyl group is added to C-8 by the cytochrome P450 monooxygenase TRI1, followed by the addition of an isovaleryl moiety by TRI16. Finally, the acetyl group is removed from the C-3 position by the trichothecene C-3 esterase TRI8 to produce T-2 toxin. This is Trichothecene C-3 esterase from Fusarium sporotrichioides.